The chain runs to 301 residues: Transcription factor bHLH103 (301 aa).

The KRAB domain maps to 29–106; it reads PRSAEIVVDF…LEGLFDSSEQ (78 aa). 2 disordered regions span residues 161–184 and 239–272; these read EKSG…ETPS and TSPH…PRQD. The region spanning 180 to 229 is the bHLH domain; it reads LETPSHFPSFKVRKEKLGDRITALQQLVSPFGKTDTASVLHDAIDYIKFL. The span at 239–269 shows a compositional bias: polar residues; it reads TSPHLNSIGSGEQKQWSDKSSNNTHNQNCSP.

In terms of assembly, homodimer. In terms of tissue distribution, mature root endodermis.

It is found in the nucleus. In Arabidopsis thaliana (Mouse-ear cress), this protein is Transcription factor bHLH103 (BHLH103).